The sequence spans 397 residues: Multidrug resistance protein MdtH (397 aa).

10 consecutive transmembrane segments (helical) span residues 11–31, 71–91, 94–114, 137–157, 163–183, 211–231, 242–262, 291–311, 338–358, and 366–386; these read WFLALDSLLVILGFFVVMPMI, FGARPLIVGGMLLRAAGFASL, AQSGLELILSCIISGLGGCLF, LLMMLESAGAVVGALLGSWLL, YVCLLGAGLFVCAALCNLLIL, LVLILSGYYALWVQVMLIFPI, AVGWMYTLETAISLTLLYPLA, FATTLPAVFVLLACFYLGIVI, LGLALGGMTGYVGGGALHDYA, and LPWLVLGTVGVTTLLLLVNCF.

This sequence belongs to the major facilitator superfamily. DHA1 family. MdtH (TC 2.A.1.2.21) subfamily.

It is found in the cell inner membrane. In Aeromonas salmonicida (strain A449), this protein is Multidrug resistance protein MdtH.